A 227-amino-acid chain; its full sequence is Trypsin (227 aa).

Positions 1–223 (IVGGEDANVQ…YYDVLMEQIN (223 aa)) constitute a Peptidase S1 domain. A disulfide bond links C27 and C43. Residues H42 and D88 each act as charge relay system in the active site. Disulfide bonds link C150-C164 and C175-C199. The active-site Charge relay system is the S179.

It belongs to the peptidase S1 family.

The enzyme catalyses Preferential cleavage: Arg-|-Xaa, Lys-|-Xaa.. The sequence is that of Trypsin from Saccharopolyspora erythraea (Streptomyces erythraeus).